Consider the following 195-residue polypeptide: Peptidyl-tRNA hydrolase (195 aa).

A tRNA-binding site is contributed by Tyr-18. His-23 (proton acceptor) is an active-site residue. Positions 69, 71, and 117 each coordinate tRNA.

This sequence belongs to the PTH family. Monomer.

It is found in the cytoplasm. It catalyses the reaction an N-acyl-L-alpha-aminoacyl-tRNA + H2O = an N-acyl-L-amino acid + a tRNA + H(+). In terms of biological role, hydrolyzes ribosome-free peptidyl-tRNAs (with 1 or more amino acids incorporated), which drop off the ribosome during protein synthesis, or as a result of ribosome stalling. Functionally, catalyzes the release of premature peptidyl moieties from peptidyl-tRNA molecules trapped in stalled 50S ribosomal subunits, and thus maintains levels of free tRNAs and 50S ribosomes. This is Peptidyl-tRNA hydrolase from Nitrosomonas europaea (strain ATCC 19718 / CIP 103999 / KCTC 2705 / NBRC 14298).